The primary structure comprises 469 residues: Adenosylhomocysteinase (469 aa).

Substrate contacts are provided by Thr-63, Asp-139, and Glu-164. Residue 165-167 (TTT) participates in NAD(+) binding. Substrate-binding residues include Lys-194 and Asp-198. Residues Asn-199, 228–233 (GYGDVG), Glu-251, Asn-300, 321–323 (IGH), and Asn-375 each bind NAD(+).

It belongs to the adenosylhomocysteinase family. Requires NAD(+) as cofactor.

The protein resides in the cytoplasm. It carries out the reaction S-adenosyl-L-homocysteine + H2O = L-homocysteine + adenosine. It participates in amino-acid biosynthesis; L-homocysteine biosynthesis; L-homocysteine from S-adenosyl-L-homocysteine: step 1/1. Its function is as follows. May play a key role in the regulation of the intracellular concentration of adenosylhomocysteine. In Pseudomonas fluorescens (strain ATCC BAA-477 / NRRL B-23932 / Pf-5), this protein is Adenosylhomocysteinase.